A 270-amino-acid polypeptide reads, in one-letter code: Dermonecrotic toxin LsaSicTox-alphaIB1av (270 aa).

Residue histidine 2 is part of the active site. Residues glutamate 22 and aspartate 24 each coordinate Mg(2+). The active-site Nucleophile is histidine 38. 2 disulfides stabilise this stretch: cysteine 42–cysteine 48 and cysteine 44–cysteine 187. Aspartate 82 contacts Mg(2+).

Belongs to the arthropod phospholipase D family. Class II subfamily. Requires Mg(2+) as cofactor. In terms of tissue distribution, expressed by the venom gland.

It is found in the secreted. It carries out the reaction an N-(acyl)-sphingosylphosphocholine = an N-(acyl)-sphingosyl-1,3-cyclic phosphate + choline. The enzyme catalyses an N-(acyl)-sphingosylphosphoethanolamine = an N-(acyl)-sphingosyl-1,3-cyclic phosphate + ethanolamine. The catalysed reaction is a 1-acyl-sn-glycero-3-phosphocholine = a 1-acyl-sn-glycero-2,3-cyclic phosphate + choline. It catalyses the reaction a 1-acyl-sn-glycero-3-phosphoethanolamine = a 1-acyl-sn-glycero-2,3-cyclic phosphate + ethanolamine. Its function is as follows. Dermonecrotic toxins cleave the phosphodiester linkage between the phosphate and headgroup of certain phospholipids (sphingolipid and lysolipid substrates), forming an alcohol (often choline) and a cyclic phosphate. This toxin acts on sphingomyelin (SM). It may also act on ceramide phosphoethanolamine (CPE), lysophosphatidylcholine (LPC) and lysophosphatidylethanolamine (LPE), but not on lysophosphatidylserine (LPS), and lysophosphatidylglycerol (LPG). It acts by transphosphatidylation, releasing exclusively cyclic phosphate products as second products. Induces dermonecrosis, hemolysis, increased vascular permeability, edema, inflammatory response, and platelet aggregation. This Loxosceles sabina (Tucson recluse spider) protein is Dermonecrotic toxin LsaSicTox-alphaIB1av.